We begin with the raw amino-acid sequence, 284 residues long: Xyloglucan endotransglucosylase/hydrolase protein 22 (284 aa).

An N-terminal signal peptide occupies residues 1 to 21 (MAITYLLPLFLSLIITSSVSA). One can recognise a GH16 domain in the interval 22 to 211 (NFQRDVEITW…WSKAPFTASY (190 aa)). Residue E97 is the Nucleophile of the active site. The Proton donor role is filled by E101. Residue E101 coordinates xyloglucan. N105 carries an N-linked (GlcNAc...) asparagine glycan. Residues 114–116 (HTN), 124–126 (DKE), 190–191 (DW), and G195 contribute to the xyloglucan site. A disulfide bond links C219 and C228. N230 carries N-linked (GlcNAc...) asparagine glycosylation. C267 and C281 form a disulfide bridge. R272 serves as a coordination point for xyloglucan.

It belongs to the glycosyl hydrolase 16 family. XTH group 2 subfamily. Contains at least one intrachain disulfide bond essential for its enzymatic activity. Post-translationally, N-glycosylated; essential for its enzymatic activity. Highly expressed. Predominantly expressed in green siliques. Expressed in young expanding leaves, trichomes, lateral root primordia, vascular tissue, abscission zones and elongating hypocols. Following wind stimulation, it decreases in the leaves of wind-stimulated plants, while it strongly increases in sites around cells of the pith parenchyma, between the vascular elements, and within the epidermis.

Its subcellular location is the secreted. The protein localises to the cell wall. The protein resides in the extracellular space. It is found in the apoplast. It catalyses the reaction breaks a beta-(1-&gt;4) bond in the backbone of a xyloglucan and transfers the xyloglucanyl segment on to O-4 of the non-reducing terminal glucose residue of an acceptor, which can be a xyloglucan or an oligosaccharide of xyloglucan.. Its function is as follows. Catalyzes xyloglucan endohydrolysis (XEH) and/or endotransglycosylation (XET). Cleaves and religates xyloglucan polymers, an essential constituent of the primary cell wall, and thereby participates in cell wall construction of growing tissues. Its induction in case of mechanical stress, suggests that it may contribute in the adaptive changes in morphogenesis by being recruited to alter tissues tensil strength, or flexibility, enabling adaptation to mechanically stressful environments. This is Xyloglucan endotransglucosylase/hydrolase protein 22 (XTH22) from Arabidopsis thaliana (Mouse-ear cress).